Reading from the N-terminus, the 215-residue chain is Keratin-associated protein 26-1 (215 aa).

Belongs to the PMG family. As to quaternary structure, interacts with hair keratins.

In the hair cortex, hair keratin intermediate filaments are embedded in an interfilamentous matrix, consisting of hair keratin-associated proteins (KRTAP), which are essential for the formation of a rigid and resistant hair shaft through their extensive disulfide bond cross-linking with abundant cysteine residues of hair keratins. The matrix proteins include the high-sulfur and high-glycine-tyrosine keratins. The sequence is that of Keratin-associated protein 26-1 from Mus musculus (Mouse).